A 480-amino-acid polypeptide reads, in one-letter code: Thyroid receptor-interacting protein 6 (480 aa).

Over residues 1–12 (MSGPTWLPPKQP) the composition is skewed to pro residues. The disordered stretch occupies residues 1-43 (MSGPTWLPPKQPEPSRLPQGRSLPRGALGPPTAHGATLQPHPR). Asymmetric dimethylarginine; alternate is present on R25. Position 25 is an omega-N-methylarginine; alternate (R25). The residue at position 55 (Y55) is a Phosphotyrosine; by SRC. Positions 57-84 (PPGVPEDRGPTWVGSHGTPQRLQGLPPD) are disordered. Phosphoserine is present on S92. The tract at residues 107-134 (LDGGRSHAPRRPDRQAFEAPPPHAYRGG) is disordered. Residues 108–122 (DGGRSHAPRRPDRQA) show a composition bias toward basic and acidic residues. R111, R183, and R190 each carry omega-N-methylarginine. At S193 the chain carries Phosphoserine. Residues R209 and R242 each carry the omega-N-methylarginine modification. Residues 218-257 (RSHREPGPGVPEGPSGVHIPAGGGRGGGHEPQGPLGQPPE) are disordered. Residues 238–247 (AGGGRGGGHE) are compositionally biased toward gly residues. LIM zinc-binding domains are found at residues 281-339 (GRCG…YVAT), 341-401 (EKCS…KFAP), and 404-471 (SVCG…RIQE). Residues 473-480 (SATVTTDC) are interaction with MAGI1 and PTPN13.

Belongs to the zyxin/ajuba family. Specifically interacts with the ligand binding domain of the thyroid receptor (TR) in the presence of thyroid hormone. Interacts (via the third LIM domain and C-terminus) with PTPN13 (via the second PDZ domain). Interacts (via the second LIM domain or via the third LIM domain plus C-terminus) with PDLIM4 (via PDZ domain). Found in a complex with PTPN13 and PDLIM4. Interacts with SVIL isoform 2. Interacts with LPAR2 but not other LPA receptors. Interacts with PRKAA2. Interacts with MAGI1. Interacts with SCRIB. In case of infection, interacts with S.typhimurium protein sseI. Post-translationally, phosphorylation at Tyr-55 by SRC is required for enhancement of lysophosphatidic acid-induced cell migration. Tyr-55 is dephosphorylated by PTPN13. In terms of tissue distribution, highly expressed in kidney, stomach, lung, heart and testis. Low expression levels in brain, colon, thymus, pancreas and skin. Not expressed in skeletal muscle.

The protein localises to the cytoplasm. Its subcellular location is the cytoskeleton. It is found in the cell junction. The protein resides in the focal adhesion. It localises to the nucleus. Relays signals from the cell surface to the nucleus to weaken adherens junction and promote actin cytoskeleton reorganization and cell invasiveness. Involved in lysophosphatidic acid-induced cell adhesion and migration. Acts as a transcriptional coactivator for NF-kappa-B and JUN, and mediates the transrepression of these transcription factors induced by glucocorticoid receptor. In Mus musculus (Mouse), this protein is Thyroid receptor-interacting protein 6 (Trip6).